The sequence spans 156 residues: 6,7-dimethyl-8-ribityllumazine synthase (156 aa).

5-amino-6-(D-ribitylamino)uracil is bound by residues phenylalanine 23, 57-59 (AFE), and 81-83 (TVI). Position 86–87 (86–87 (ST)) interacts with (2S)-2-hydroxy-3-oxobutyl phosphate. The Proton donor role is filled by histidine 89. Phenylalanine 114 provides a ligand contact to 5-amino-6-(D-ribitylamino)uracil. Arginine 128 provides a ligand contact to (2S)-2-hydroxy-3-oxobutyl phosphate.

The protein belongs to the DMRL synthase family. Forms an icosahedral capsid composed of 60 subunits, arranged as a dodecamer of pentamers.

The enzyme catalyses (2S)-2-hydroxy-3-oxobutyl phosphate + 5-amino-6-(D-ribitylamino)uracil = 6,7-dimethyl-8-(1-D-ribityl)lumazine + phosphate + 2 H2O + H(+). It participates in cofactor biosynthesis; riboflavin biosynthesis; riboflavin from 2-hydroxy-3-oxobutyl phosphate and 5-amino-6-(D-ribitylamino)uracil: step 1/2. Functionally, catalyzes the formation of 6,7-dimethyl-8-ribityllumazine by condensation of 5-amino-6-(D-ribitylamino)uracil with 3,4-dihydroxy-2-butanone 4-phosphate. This is the penultimate step in the biosynthesis of riboflavin. The sequence is that of 6,7-dimethyl-8-ribityllumazine synthase from Shouchella clausii (strain KSM-K16) (Alkalihalobacillus clausii).